The following is a 373-amino-acid chain: DNA dC-&gt;dU-editing enzyme APOBEC-3F (373 aa).

CMP/dCMP-type deaminase domains lie at 29–137 (RRNT…LCRL) and 174–321 (DDNY…LRSL). Lys-52 is covalently cross-linked ((Microbial infection) Glycyl lysine isopeptide (Lys-Gly) (interchain with G-Cter in ubiquitin)). The Zn(2+) site is built by His-65, Cys-96, and Cys-99. Lys-234 participates in a covalent cross-link: (Microbial infection) Glycyl lysine isopeptide (Lys-Gly) (interchain with G-Cter in ubiquitin). Position 249 (His-249) interacts with Zn(2+). Residue Glu-251 is the Proton donor of the active site. 2 residues coordinate Zn(2+): Cys-280 and Cys-283. A disulfide bridge connects residues Cys-280 and Cys-283. (Microbial infection) Glycyl lysine isopeptide (Lys-Gly) (interchain with G-Cter in ubiquitin) cross-links involve residues Lys-334, Lys-352, Lys-355, and Lys-358.

Belongs to the cytidine and deoxycytidylate deaminase family. Homodimer. Interacts with APOBEC3G in an RNA-dependent manner. Interacts with AGO1, AGO2 and AGO3. As to quaternary structure, (Microbial infection) Interacts with HIV-1 Vif, leading to its ubiquitination and degradation by the proteasome. In the absence of Vif protein, specifically packaged into HIV-1 virions. Zn(2+) serves as cofactor. In terms of processing, (Microbial infection) Following infection by HIV-1, ubiquitinated by a cullin-5-RING E3 ubiquitin-protein ligase complex (ECS complex) hijacked by the HIV-1 Vif protein, leading to its degradation. In terms of tissue distribution, widely expressed. Highly expressed in ovary.

Its subcellular location is the cytoplasm. The protein resides in the P-body. The catalysed reaction is a 2'-deoxycytidine in single-stranded DNA + H2O + H(+) = a 2'-deoxyuridine in single-stranded DNA + NH4(+). (Microbial infection) Antiviral activity is neutralized by the HIV-1 virion infectivity factor (Vif), that prevents its incorporation into progeny virions by both inhibiting its translation and/or by inducing its ubiquitination and subsequent degradation by the 26S proteasome. Its function is as follows. DNA deaminase (cytidine deaminase) which acts as an inhibitor of retrovirus replication and retrotransposon mobility via deaminase-dependent and -independent mechanisms. Exhibits antiviral activity against viruse such as HIV-1 or HIV-2. After the penetration of retroviral nucleocapsids into target cells of infection and the initiation of reverse transcription, it can induce the conversion of cytosine to uracil in the minus-sense single-strand viral DNA, leading to G-to-A hypermutations in the subsequent plus-strand viral DNA. The resultant detrimental levels of mutations in the proviral genome, along with a deamination-independent mechanism that works prior to the proviral integration, together exert efficient antiretroviral effects in infected target cells. Selectively targets single-stranded DNA and does not deaminate double-stranded DNA or single- or double-stranded RNA. Exhibits antiviral activity also against hepatitis B virus (HBV), equine infectious anemia virus (EIAV), xenotropic MuLV-related virus (XMRV) and simian foamy virus (SFV) and may inhibit the mobility of LTR and non-LTR retrotransposons. May also play a role in the epigenetic regulation of gene expression through the process of active DNA demethylation. The sequence is that of DNA dC-&gt;dU-editing enzyme APOBEC-3F from Homo sapiens (Human).